Consider the following 470-residue polypeptide: FAD-dependent monooxygenase dpchE (470 aa).

Positions Met1–Leu24 are cleaved as a signal peptide. Residues Glu35, Gly49, and Arg108 each contribute to the FAD site. Asn128 carries an N-linked (GlcNAc...) asparagine glycan. Arg193 is an active-site residue. The FAD site is built by Asp312 and Ala325. Residues Trp447–Leu463 form a helical membrane-spanning segment.

The protein belongs to the paxM FAD-dependent monooxygenase family. The cofactor is FAD.

The protein localises to the membrane. It functions in the pathway secondary metabolite biosynthesis; terpenoid biosynthesis. Its function is as follows. FAD-dependent monooxygenase; part of the gene cluster that mediates the biosynthesis of the diterpenoid pyrones higginsianins A and B. The first step of the pathway is the synthesis of the alpha-pyrone moiety by the polyketide synthase dpchA via condensation of one acetyl-CoA starter unit with 3 malonyl-CoA units and 2 methylations. The alpha-pyrone is then combined with geranylgeranyl pyrophosphate (GGPP) formed by the GGPP synthase dpchD through the action of the prenyltransferase dpchC to yield a linear alpha-pyrone diterpenoid. Subsequent steps in the diterpenoid pyrone biosynthetic pathway involve the decalin core formation, which is initiated by the epoxidation of the C10-C11 olefin by the FAD-dependent oxidoreductase dpchE, and is followed by a cyclization cascade catalyzed by the terpene cyclase dpchB. The short chain dehydrogenase/reductase dpchG then oxidizes the 8S hydroxy group to a ketone and the short chain dehydrogenase/reductase dpchH reduces the ketone to the 8R hydroxy group to yield higginsianin B. Finally, the FAD-dependent oxidoreductase dpchF converts higginsianin B into higginsianin A. The protein is FAD-dependent monooxygenase dpchE of Colletotrichum higginsianum (strain IMI 349063) (Crucifer anthracnose fungus).